The chain runs to 522 residues: BTB/POZ domain-containing protein 3 (522 aa).

The segment at 25-44 (RSKKSSKKANTSSSSSNSSK) is disordered. The span at 32-44 (KANTSSSSSNSSK) shows a compositional bias: low complexity. In terms of domain architecture, BTB spans 120–190 (ADVHFVVGPP…IYCDEIDLAA (71 aa)). The BACK domain occupies 235–300 (FEEPDLTQRC…NWAEVECQRQ (66 aa)).

It localises to the cytoplasm. Its subcellular location is the cytosol. The protein localises to the nucleus. Functionally, acts as a key regulator of dendritic field orientation during development of sensory cortex. Also directs dendrites toward active axon terminals when ectopically expressed. In Homo sapiens (Human), this protein is BTB/POZ domain-containing protein 3 (BTBD3).